Here is a 198-residue protein sequence, read N- to C-terminus: Probable GTP-binding protein EngB (198 aa).

Positions 22–195 constitute an EngB-type G domain; sequence HRNEVAFVGR…IDKLFLEFAT (174 aa). GTP-binding positions include 30–37, 57–61, 75–78, 142–145, and 174–176; these read GRSNVGKS, GKTRL, DLPG, TKSD, and YSS. Residues Ser-37 and Thr-59 each contribute to the Mg(2+) site.

It belongs to the TRAFAC class TrmE-Era-EngA-EngB-Septin-like GTPase superfamily. EngB GTPase family. Requires Mg(2+) as cofactor.

Its function is as follows. Necessary for normal cell division and for the maintenance of normal septation. This chain is Probable GTP-binding protein EngB, found in Clostridium botulinum (strain Eklund 17B / Type B).